A 302-amino-acid chain; its full sequence is Cardiolipin synthase (CMP-forming) (302 aa).

A disordered region spans residues 65 to 84 (PRTHCSGAGKAAPEPAAGGD). Residues 71-84 (GAGKAAPEPAAGGD) are compositionally biased toward low complexity. 5 helical membrane-spanning segments follow: residues 109 to 129 (IPNL…YLIL), 133 to 153 (FNVA…DGFI), 190 to 212 (IPVP…VFYV), 250 to 270 (LILV…SIYL), and 271 to 289 (QILW…YSYY).

The protein belongs to the CDP-alcohol phosphatidyltransferase class-I family. A divalent metal cation is required as a cofactor.

Its subcellular location is the mitochondrion inner membrane. The enzyme catalyses a CDP-1,2-diacyl-sn-glycerol + a 1,2-diacyl-sn-glycero-3-phospho-(1'-sn-glycerol) = a cardiolipin + CMP + H(+). Catalyzes the synthesis of cardiolipin (CL) (diphosphatidylglycerol) by specifically transferring a phosphatidyl group from CDP-diacylglycerol to phosphatidylglycerol (PG). CL is a key phospholipid in mitochondrial membranes and plays important roles in maintaining the functional integrity and dynamics of mitochondria under both optimal and stress conditions. The chain is Cardiolipin synthase (CMP-forming) (Crls1) from Rattus norvegicus (Rat).